The chain runs to 243 residues: Pyridoxine 5'-phosphate synthase (243 aa).

A 3-amino-2-oxopropyl phosphate-binding site is contributed by N9. Residue 11 to 12 (DH) coordinates 1-deoxy-D-xylulose 5-phosphate. R20 provides a ligand contact to 3-amino-2-oxopropyl phosphate. H45 (proton acceptor) is an active-site residue. R47 and H52 together coordinate 1-deoxy-D-xylulose 5-phosphate. E72 acts as the Proton acceptor in catalysis. T102 provides a ligand contact to 1-deoxy-D-xylulose 5-phosphate. The Proton donor role is filled by H193. 3-amino-2-oxopropyl phosphate contacts are provided by residues G194 and 215–216 (GH).

Belongs to the PNP synthase family. As to quaternary structure, homooctamer; tetramer of dimers.

It is found in the cytoplasm. It catalyses the reaction 3-amino-2-oxopropyl phosphate + 1-deoxy-D-xylulose 5-phosphate = pyridoxine 5'-phosphate + phosphate + 2 H2O + H(+). The protein operates within cofactor biosynthesis; pyridoxine 5'-phosphate biosynthesis; pyridoxine 5'-phosphate from D-erythrose 4-phosphate: step 5/5. In terms of biological role, catalyzes the complicated ring closure reaction between the two acyclic compounds 1-deoxy-D-xylulose-5-phosphate (DXP) and 3-amino-2-oxopropyl phosphate (1-amino-acetone-3-phosphate or AAP) to form pyridoxine 5'-phosphate (PNP) and inorganic phosphate. The sequence is that of Pyridoxine 5'-phosphate synthase from Shigella dysenteriae serotype 1 (strain Sd197).